A 122-amino-acid chain; its full sequence is ATP synthase epsilon chain (122 aa).

Positions 97–112 (EDLKSERELTRSRGDA) are enriched in basic and acidic residues. The disordered stretch occupies residues 97-122 (EDLKSERELTRSRGDAALRATRRLNS).

It belongs to the ATPase epsilon chain family. As to quaternary structure, F-type ATPases have 2 components, CF(1) - the catalytic core - and CF(0) - the membrane proton channel. CF(1) has five subunits: alpha(3), beta(3), gamma(1), delta(1), epsilon(1). CF(0) has three main subunits: a, b and c.

It localises to the cell membrane. Functionally, produces ATP from ADP in the presence of a proton gradient across the membrane. The chain is ATP synthase epsilon chain from Corynebacterium aurimucosum (strain ATCC 700975 / DSM 44827 / CIP 107346 / CN-1) (Corynebacterium nigricans).